Reading from the N-terminus, the 464-residue chain is Aspartyl protease 37 (464 aa).

The first 19 residues, 1-19 (MNAAVLLLLLALAALPASC), serve as a signal peptide directing secretion. Residue Asn41 is glycosylated (N-linked (GlcNAc...) asparagine). The Peptidase A1 domain occupies 89-456 (YLVKLGIGTP…NLRRGRVTFV (368 aa)). Asp107 is a catalytic residue. Cys117 and Cys123 form a disulfide bridge. Asn174 and Asn261 each carry an N-linked (GlcNAc...) asparagine glycan. A compositionally biased stretch (low complexity) spans 299 to 311 (TTTTTATATATAP). Positions 299 to 319 (TTTTTATATATAPAPAPTPSP) are disordered. Asn320 is a glycosylation site (N-linked (GlcNAc...) asparagine). Asp337 is a catalytic residue. A disulfide bond links Cys376 and Cys420.

It belongs to the peptidase A1 family.

Functionally, anther-specific aspartic protease involved in tapetal programmed cell death (PCD). Directly regulated by the transcription factor EAT1/DTD in anthers during tapetum PCD and degeneration. This Oryza sativa subsp. japonica (Rice) protein is Aspartyl protease 37.